The chain runs to 1184 residues: DNA-directed RNA polymerase subunit beta' (1184 aa).

Residues C60, C62, C75, and C78 each contribute to the Zn(2+) site. Positions 449, 451, and 453 each coordinate Mg(2+). Positions 794, 867, 874, and 877 each coordinate Zn(2+).

The protein belongs to the RNA polymerase beta' chain family. As to quaternary structure, the RNAP catalytic core consists of 2 alpha, 1 beta, 1 beta' and 1 omega subunit. When a sigma factor is associated with the core the holoenzyme is formed, which can initiate transcription. Requires Mg(2+) as cofactor. Zn(2+) serves as cofactor.

The enzyme catalyses RNA(n) + a ribonucleoside 5'-triphosphate = RNA(n+1) + diphosphate. Functionally, DNA-dependent RNA polymerase catalyzes the transcription of DNA into RNA using the four ribonucleoside triphosphates as substrates. The protein is DNA-directed RNA polymerase subunit beta' of Thermoanaerobacter sp. (strain X514).